The following is a 70-amino-acid chain: DNA-directed RNA polymerase subunit omega (70 aa).

This sequence belongs to the RNA polymerase subunit omega family. The RNAP catalytic core consists of 2 alpha, 1 beta, 1 beta' and 1 omega subunit. When a sigma factor is associated with the core the holoenzyme is formed, which can initiate transcription.

It catalyses the reaction RNA(n) + a ribonucleoside 5'-triphosphate = RNA(n+1) + diphosphate. Functionally, promotes RNA polymerase assembly. Latches the N- and C-terminal regions of the beta' subunit thereby facilitating its interaction with the beta and alpha subunits. The chain is DNA-directed RNA polymerase subunit omega from Staphylococcus haemolyticus (strain JCSC1435).